A 206-amino-acid polypeptide reads, in one-letter code: MELKVIDAKGQVSGSLSVSDALFAREYNEALVHQLVNAYLANARSGNRAQKTRAEVKHSTKKPWRQKGTGRARSGMTSSPLWRKGGRAFPNKPDENFTQKVNRKMYRAGMATILSQLTRDERLFAIEALTAETPKTKVFAEQVKNLGLEQVLFVTKQLDENVYLASRNLPNVLVLEAQQVDPYSLLRYKKVIITKDAVAQLEEQWV.

Positions 46–95 (GNRAQKTRAEVKHSTKKPWRQKGTGRARSGMTSSPLWRKGGRAFPNKPDE) are disordered. Over residues 59–70 (STKKPWRQKGTG) the composition is skewed to basic residues.

It belongs to the universal ribosomal protein uL4 family. Part of the 50S ribosomal subunit.

One of the primary rRNA binding proteins, this protein initially binds near the 5'-end of the 23S rRNA. It is important during the early stages of 50S assembly. It makes multiple contacts with different domains of the 23S rRNA in the assembled 50S subunit and ribosome. Functionally, forms part of the polypeptide exit tunnel. The chain is Large ribosomal subunit protein uL4 from Neisseria meningitidis serogroup C (strain 053442).